A 500-amino-acid polypeptide reads, in one-letter code: Signal transduction histidine-protein kinase/phosphatase UhpB (500 aa).

Helical transmembrane passes span 8-28 (LITV…LWSI), 78-98 (VALA…LPVA), 112-132 (LLLQ…PWLG), 140-160 (ALLL…VFWH), 185-205 (HLIW…GLPA), 207-224 (LSRF…ALAW), 231-249 (ALIA…QTWH), and 253-273 (VDLL…GAGI). At 274-500 (QRLRELNQSL…VSVSLPQRYV (227 aa)) the chain is on the cytoplasmic side. The Histidine kinase domain occupies 311–499 (ELHDDIGQTI…RVSVSLPQRY (189 aa)). Histidine 313 bears the Phosphohistidine; by autocatalysis mark.

In terms of processing, autophosphorylated.

Its subcellular location is the cell inner membrane. It carries out the reaction ATP + protein L-histidine = ADP + protein N-phospho-L-histidine.. In terms of biological role, part of the UhpABC signaling cascade that controls the expression of the hexose phosphate transporter UhpT. UhpB functions as a membrane-associated protein kinase that autophosphorylates in response to interaction with UhpC, and subsequently transfers its phosphate group to the response regulator UhpA. Can also dephosphorylate UhpA. This Salmonella typhimurium (strain LT2 / SGSC1412 / ATCC 700720) protein is Signal transduction histidine-protein kinase/phosphatase UhpB (uhpB).